The following is a 293-amino-acid chain: Ribosomal protein L11 methyltransferase (293 aa).

Residues Thr145, Gly166, Asp188, and Asn230 each contribute to the S-adenosyl-L-methionine site.

It belongs to the methyltransferase superfamily. PrmA family.

Its subcellular location is the cytoplasm. It catalyses the reaction L-lysyl-[protein] + 3 S-adenosyl-L-methionine = N(6),N(6),N(6)-trimethyl-L-lysyl-[protein] + 3 S-adenosyl-L-homocysteine + 3 H(+). Methylates ribosomal protein L11. The chain is Ribosomal protein L11 methyltransferase from Shewanella baltica (strain OS195).